A 155-amino-acid polypeptide reads, in one-letter code: UPF0178 protein ACIAD2644 (155 aa).

A disordered region spans residues 120 to 155 (GAGVQTGGPPPISERDKREFSSALDQTILKQKRKTA).

The protein belongs to the UPF0178 family.

In Acinetobacter baylyi (strain ATCC 33305 / BD413 / ADP1), this protein is UPF0178 protein ACIAD2644.